A 132-amino-acid chain; its full sequence is Large ribosomal subunit protein bL21 (132 aa).

The disordered stretch occupies residues 111–132 (AAEKPARKPRAKKTNEVTTDGA).

The protein belongs to the bacterial ribosomal protein bL21 family. In terms of assembly, part of the 50S ribosomal subunit. Contacts protein L20.

This protein binds to 23S rRNA in the presence of protein L20. The chain is Large ribosomal subunit protein bL21 from Dehalococcoides mccartyi (strain CBDB1).